The sequence spans 62 residues: Photosystem II reaction center protein Z (62 aa).

Transmembrane regions (helical) follow at residues 8–28 (AVFA…VVFS) and 41–61 (FSGT…NSLI).

Belongs to the PsbZ family. In terms of assembly, PSII is composed of 1 copy each of membrane proteins PsbA, PsbB, PsbC, PsbD, PsbE, PsbF, PsbH, PsbI, PsbJ, PsbK, PsbL, PsbM, PsbT, PsbY, PsbZ, Psb30/Ycf12, at least 3 peripheral proteins of the oxygen-evolving complex and a large number of cofactors. It forms dimeric complexes.

It is found in the plastid. Its subcellular location is the chloroplast thylakoid membrane. Its function is as follows. May control the interaction of photosystem II (PSII) cores with the light-harvesting antenna, regulates electron flow through the 2 photosystem reaction centers. PSII is a light-driven water plastoquinone oxidoreductase, using light energy to abstract electrons from H(2)O, generating a proton gradient subsequently used for ATP formation. The polypeptide is Photosystem II reaction center protein Z (Populus alba (White poplar)).